The sequence spans 86 residues: Cell division topological specificity factor (86 aa).

This sequence belongs to the MinE family.

Its function is as follows. Prevents the cell division inhibition by proteins MinC and MinD at internal division sites while permitting inhibition at polar sites. This ensures cell division at the proper site by restricting the formation of a division septum at the midpoint of the long axis of the cell. This is Cell division topological specificity factor from Rhizobium johnstonii (strain DSM 114642 / LMG 32736 / 3841) (Rhizobium leguminosarum bv. viciae).